A 179-amino-acid chain; its full sequence is Orotate phosphoribosyltransferase (179 aa).

Residues Arg-94, Lys-95, Lys-98, His-100, and 120-128 (EDTSTTGNS) each bind 5-phospho-alpha-D-ribose 1-diphosphate. Orotate-binding residues include Thr-124 and Arg-152.

Belongs to the purine/pyrimidine phosphoribosyltransferase family. PyrE subfamily. In terms of assembly, homodimer. Mg(2+) is required as a cofactor.

The catalysed reaction is orotidine 5'-phosphate + diphosphate = orotate + 5-phospho-alpha-D-ribose 1-diphosphate. The protein operates within pyrimidine metabolism; UMP biosynthesis via de novo pathway; UMP from orotate: step 1/2. In terms of biological role, catalyzes the transfer of a ribosyl phosphate group from 5-phosphoribose 1-diphosphate to orotate, leading to the formation of orotidine monophosphate (OMP). This Mycobacterium avium (strain 104) protein is Orotate phosphoribosyltransferase.